Reading from the N-terminus, the 75-residue chain is Kappa-scoloptoxin(03)-Ssm1d (75 aa).

The signal sequence occupies residues 1–23 (MKLSMAILLVMALIIFTLDKNYS).

This sequence belongs to the scoloptoxin-03 family. In terms of processing, contains 3 disulfide bonds. As to expression, expressed by the venom gland.

It localises to the secreted. Its function is as follows. Inhibits voltage-gated potassium channels. This Scolopendra mutilans (Chinese red-headed centipede) protein is Kappa-scoloptoxin(03)-Ssm1d.